Consider the following 307-residue polypeptide: tRNA dimethylallyltransferase (307 aa).

8–15 serves as a coordination point for ATP; it reads GPTGSGKS. 10 to 15 is a substrate binding site; the sequence is TGSGKS. Residues 33–36 form an interaction with substrate tRNA region; sequence DSLQ.

The protein belongs to the IPP transferase family. Monomer. Mg(2+) is required as a cofactor.

The enzyme catalyses adenosine(37) in tRNA + dimethylallyl diphosphate = N(6)-dimethylallyladenosine(37) in tRNA + diphosphate. Catalyzes the transfer of a dimethylallyl group onto the adenine at position 37 in tRNAs that read codons beginning with uridine, leading to the formation of N6-(dimethylallyl)adenosine (i(6)A). This Solibacter usitatus (strain Ellin6076) protein is tRNA dimethylallyltransferase.